The primary structure comprises 259 residues: Flap endonuclease Xni (259 aa).

D109 contributes to the Mg(2+) binding site. The region spanning 165–255 is the 5'-3' exonuclease domain; sequence LKPEQLADYW…FNLQDIRYEK (91 aa). Positions 176, 177, 187, and 190 each coordinate K(+). The interval 189 to 194 is interaction with DNA; sequence GVGPKA.

Belongs to the Xni family. It depends on Mg(2+) as a cofactor. K(+) is required as a cofactor.

Functionally, has flap endonuclease activity. During DNA replication, flap endonucleases cleave the 5'-overhanging flap structure that is generated by displacement synthesis when DNA polymerase encounters the 5'-end of a downstream Okazaki fragment. The chain is Flap endonuclease Xni from Aliivibrio fischeri (strain ATCC 700601 / ES114) (Vibrio fischeri).